Consider the following 194-residue polypeptide: Cytochrome b-245 light chain (194 aa).

The Cytoplasmic portion of the chain corresponds to 2–7; it reads GQIEWA. A helical membrane pass occupies residues 8 to 30; sequence MWANEQALASGLILVAGGIVATA. The Extracellular portion of the chain corresponds to 31–35; sequence GRFTQ. Residues 36-53 traverse the membrane as a helical segment; that stretch reads WYFGTYAIAAGVLVCLLE. Residues 54-69 lie on the Cytoplasmic side of the membrane; sequence YPRGSRAKGSTLERCG. The stretch at 70-80 is an intramembrane region; the sequence is QRYLTAVLKLL. Topologically, residues 81–86 are cytoplasmic; sequence GPLSRN. A helical membrane pass occupies residues 87 to 104; that stretch reads YYFRAALHLALSVPAGFL. Position 105 (Leu-105) is a topological domain, extracellular. A helical membrane pass occupies residues 106 to 126; the sequence is ATILGTVCLVIASIIYLLAAV. Residues 127–194 are Cytoplasmic-facing; it reads RGEQWTPIEP…NPIPVTDEVV (68 aa). Residues 134-194 are disordered; it reads IEPRPKERPQ…NPIPVTDEVV (61 aa). Residue Thr-147 is modified to Phosphothreonine. Lys-149 participates in a covalent cross-link: Glycyl lysine isopeptide (Lys-Gly) (interchain with G-Cter in ubiquitin).

This sequence belongs to the p22phox family. In terms of assembly, component of the phagocyte NADPH oxidase core complex/cytochrome b558 complex, composed of CYBB (heavy chain (beta)) and CYBA (light chain (alpha)). Component of the phagocyte NADPH oxidase complex composed of an obligatory core heterodimer formed by the membrane proteins CYBA and CYBB and the cytosolic regulatory subunits NCF1/p47-phox, NCF2/p67-phox, NCF4/p40-phox and the small GTPase RAC1 or RAC2. Interacts with NCF1 (via SH3 domain). Interacts with SH3PXD2A. Interacts with DUOX1, DUOX2 and TPO. Interacts with NOX4; this interaction mediates superoxide generation. Interacts with calprotectin (S100A8/9). Interacts with GBP7. Interacts with NOXO1. Forms a heterodimer with NOX3 and is essential for activity and cell membrane localization of NOX3. Interacts with NOX1. In terms of processing, phosphorylation at Thr-147 enhances NADPH oxidase activity by promoting NCF1/p47-phox binding. Post-translationally, ubiquitinated at Lys-149 likely by RNF145.

The protein resides in the cell membrane. Its function is as follows. Subunit of NADPH oxidase complexes that is required for the NADPH oxidase activity that generates, in various cell types, superoxide from molecular oxygen utilizing NADPH as an electron donor. Subunit of the phagocyte NADPH oxidase complex that mediates the transfer of electrons from cytosolic NADPH to O2 to produce the superoxide anion (O2(-)). In the activated complex, electrons are first transferred from NADPH to flavin adenine dinucleotide (FAD) and subsequently transferred via two heme molecules to molecular oxygen, producing superoxide through an outer-sphere reaction. Activation of the NADPH oxidase complex is initiated by the assembly of cytosolic subunits of the NADPH oxidase complex with the core NADPH oxidase complex to form a complex at the plasma membrane or phagosomal membrane. This activation process is initiated by phosphorylation dependent binding of the cytosolic NCF1/p47-phox subunit to the C-terminus of CYBA/p22-phox. Aassociates with NOX3 to form a functional NADPH oxidase constitutively generating superoxide. In Oryctolagus cuniculus (Rabbit), this protein is Cytochrome b-245 light chain.